Consider the following 138-residue polypeptide: ATP synthase epsilon chain (138 aa).

It belongs to the ATPase epsilon chain family. In terms of assembly, F-type ATPases have 2 components, CF(1) - the catalytic core - and CF(0) - the membrane proton channel. CF(1) has five subunits: alpha(3), beta(3), gamma(1), delta(1), epsilon(1). CF(0) has three main subunits: a, b and c.

The protein localises to the cell inner membrane. Functionally, produces ATP from ADP in the presence of a proton gradient across the membrane. In Geobacter metallireducens (strain ATCC 53774 / DSM 7210 / GS-15), this protein is ATP synthase epsilon chain.